The sequence spans 156 residues: Cyanate hydratase (156 aa).

Active-site residues include arginine 96, glutamate 99, and serine 122.

The protein belongs to the cyanase family.

The enzyme catalyses cyanate + hydrogencarbonate + 3 H(+) = NH4(+) + 2 CO2. Its function is as follows. Catalyzes the reaction of cyanate with bicarbonate to produce ammonia and carbon dioxide. In Burkholderia mallei (strain NCTC 10247), this protein is Cyanate hydratase.